We begin with the raw amino-acid sequence, 746 residues long: UvrABC system protein C (746 aa).

The 80-residue stretch at 18-97 folds into the GIY-YIG domain; sequence AKPGVYKWRD…IKEFDPRFNV (80 aa). A UVR domain is found at 211–246; it reads RPYIAQLTRDMKEASAELEFEKAARLRDQIQMLETV. Residues 557–577 are disordered; the sequence is ANGNDNGEGGSDISGKGHAVP.

The protein belongs to the UvrC family. In terms of assembly, interacts with UvrB in an incision complex.

The protein resides in the cytoplasm. The UvrABC repair system catalyzes the recognition and processing of DNA lesions. UvrC both incises the 5' and 3' sides of the lesion. The N-terminal half is responsible for the 3' incision and the C-terminal half is responsible for the 5' incision. This is UvrABC system protein C from Bifidobacterium longum (strain DJO10A).